Here is a 564-residue protein sequence, read N- to C-terminus: Phomacin cluster regulator phmR (564 aa).

The zn(2)-C6 fungal-type DNA-binding region spans 33 to 64 (CDRCRGHKLRCIRDQMTVDSPCQRCRKAREKC). 3 disordered regions span residues 68–93 (SSTRPVPARLNRSSQGHKLPGATSSA), 152–197 (DFAD…NPFL), and 252–278 (PIHPPTMASSHRTHSTASNDSSKDSTT). Composition is skewed to polar residues over residues 182-192 (ITPTSQGTTAV) and 258-278 (MASSHRTHSTASNDSSKDSTT).

It is found in the nucleus. Its function is as follows. Transcription factor that specifically regulates the expression of the gene cluster that mediates the biosynthesis of the mycotoxins phomacins, leucine-derived cytochalasans with potent actin polymerization-inhibitory activities and monocot-specific antigerminative activities. In Phaeosphaeria nodorum (strain SN15 / ATCC MYA-4574 / FGSC 10173) (Glume blotch fungus), this protein is Phomacin cluster regulator phmR.